The primary structure comprises 250 residues: Small ribosomal subunit protein uS2 (250 aa).

The protein belongs to the universal ribosomal protein uS2 family.

The sequence is that of Small ribosomal subunit protein uS2 from Paracidovorax citrulli (strain AAC00-1) (Acidovorax citrulli).